The following is a 541-amino-acid chain: NAD(P)H-quinone oxidoreductase subunit 2 A, chloroplastic (541 aa).

The next 14 membrane-spanning stretches (helical) occupy residues 24-44 (LLLFDGSLIFPECILIFGLIL), 57-77 (IPWLYFIPSTSLVMSITALLF), 99-119 (IFQFLILLCSTLCIPLSVEYI), 124-144 (MAITEFLLFVLTATLGGMFLC), 149-169 (FITIFVAPECFSLCSYLLSGY), 183-203 (YLLMGGASSSILVHGFSWLYG), 227-247 (PGISIALIFITVGIGFKLSPA), 289-309 (ILSPTPVVAFLSVTSKVAASA), 326-346 (WHLLLEILAILSMILGNLIAI), 354-374 (MLAYSSIGQIGYVIIGIIVGD), 385-405 (YMLFYISMNLGTFACIVLFGL), 426-446 (ALSLALCLLSLGGLPPLAGFF), 449-469 (LYLFWCGWQAGLYFLVLIGLL), and 515-535 (MIVCVIASTIPGISMNPIIAI).

This sequence belongs to the complex I subunit 2 family. NDH is composed of at least 16 different subunits, 5 of which are encoded in the nucleus.

The protein localises to the plastid. Its subcellular location is the chloroplast thylakoid membrane. The enzyme catalyses a plastoquinone + NADH + (n+1) H(+)(in) = a plastoquinol + NAD(+) + n H(+)(out). It catalyses the reaction a plastoquinone + NADPH + (n+1) H(+)(in) = a plastoquinol + NADP(+) + n H(+)(out). In terms of biological role, NDH shuttles electrons from NAD(P)H:plastoquinone, via FMN and iron-sulfur (Fe-S) centers, to quinones in the photosynthetic chain and possibly in a chloroplast respiratory chain. The immediate electron acceptor for the enzyme in this species is believed to be plastoquinone. Couples the redox reaction to proton translocation, and thus conserves the redox energy in a proton gradient. The protein is NAD(P)H-quinone oxidoreductase subunit 2 A, chloroplastic of Coffea arabica (Arabian coffee).